Reading from the N-terminus, the 378-residue chain is MHLNTTLLVSLALGAASVLASPAPPAITAPPTAEEIAKRATTCTFSGSNGASSASKSKTSCSTIVLSNVAVPSGTTLDLTKLNDGTHVIFSGETTFGYKEWSGPLISVSGSDLTITGASGHSINGDGSRWWDGEGGNGGKTKPKFFAAHSLTNSVISGLKIVNSPVQVFSVAGSDYLTLKDITIDNSDGDDNGGHNTDAFDIGTSTYVTISGATVYNQDDCVAVNSGENIYFSGGYCSGGHGLSIGSVGGRSDNTVKNVTFVDSTIINSDNGVRIKTNIDTTGSVSDVTYKDITLTSIAKYGIVVQQNYGDTSSTPTTGVPITDFVLDNVHGSVVSSGTNILISCGSGSCSDWTWTDVSVSGGKTSSKCTNVPSGASC.

Positions 1–20 are cleaved as a signal peptide; the sequence is MHLNTTLLVSLALGAASVLA. The propeptide occupies 21–39; it reads SPAPPAITAPPTAEEIAKR. Cys-43 and Cys-61 form a disulfide bridge. O-linked (Man...) threonine glycosylation is present at Thr-44. Ser-46, Ser-48, Ser-52, Ser-53, Ser-55, Ser-57, and Ser-62 each carry an O-linked (Man...) serine glycan. A glycan (O-linked (Man...) threonine) is linked at Thr-63. O-linked (Man...) serine glycosylation occurs at Ser-73. 5 PbH1 repeats span residues 174–204, 205–226, 227–247, 256–277, and 285–307; these read SDYL…DIGT, STYV…AVNS, GENI…SIGS, VKNV…RIKT, and VSDV…VVQQ. Asp-219 acts as the Proton donor in catalysis. A disulfide bridge links Cys-221 with Cys-237. The active site involves His-241. Asn-258 carries N-linked (GlcNAc...) asparagine glycosylation. 2 disulfides stabilise this stretch: Cys-345–Cys-350 and Cys-369–Cys-378.

Belongs to the glycosyl hydrolase 28 family.

Its subcellular location is the secreted. The catalysed reaction is (1,4-alpha-D-galacturonosyl)n+m + H2O = (1,4-alpha-D-galacturonosyl)n + (1,4-alpha-D-galacturonosyl)m.. Involved in maceration and soft-rotting of plant tissue. Hydrolyzes the 1,4-alpha glycosidic bonds of de-esterified pectate in the smooth region of the plant cell wall. This chain is Endopolygalacturonase I (pgaI), found in Aspergillus aculeatus.